Here is a 242-residue protein sequence, read N- to C-terminus: Uridylate kinase (242 aa).

16 to 19 (KVSG) is a binding site for ATP. Glycine 58 contributes to the UMP binding site. Positions 59 and 63 each coordinate ATP. UMP contacts are provided by residues aspartate 78 and 139–146 (TGNPFCTT). The ATP site is built by threonine 166, glutamine 167, tyrosine 172, and aspartate 175.

Belongs to the UMP kinase family. As to quaternary structure, homohexamer.

The protein localises to the cytoplasm. The enzyme catalyses UMP + ATP = UDP + ADP. Its pathway is pyrimidine metabolism; CTP biosynthesis via de novo pathway; UDP from UMP (UMPK route): step 1/1. With respect to regulation, inhibited by UTP. In terms of biological role, catalyzes the reversible phosphorylation of UMP to UDP. The sequence is that of Uridylate kinase from Rickettsia massiliae (strain Mtu5).